Here is a 611-residue protein sequence, read N- to C-terminus: Dihydroxy-acid dehydratase (611 aa).

Mg(2+) is bound at residue Asp-81. A [2Fe-2S] cluster-binding site is contributed by Cys-122. Asp-123 and Lys-124 together coordinate Mg(2+). Lys-124 carries the post-translational modification N6-carboxylysine. Residue Cys-195 participates in [2Fe-2S] cluster binding. Glu-491 lines the Mg(2+) pocket. Ser-517 (proton acceptor) is an active-site residue.

It belongs to the IlvD/Edd family. Homodimer. [2Fe-2S] cluster is required as a cofactor. Requires Mg(2+) as cofactor.

It catalyses the reaction (2R)-2,3-dihydroxy-3-methylbutanoate = 3-methyl-2-oxobutanoate + H2O. The enzyme catalyses (2R,3R)-2,3-dihydroxy-3-methylpentanoate = (S)-3-methyl-2-oxopentanoate + H2O. It participates in amino-acid biosynthesis; L-isoleucine biosynthesis; L-isoleucine from 2-oxobutanoate: step 3/4. It functions in the pathway amino-acid biosynthesis; L-valine biosynthesis; L-valine from pyruvate: step 3/4. Its function is as follows. Functions in the biosynthesis of branched-chain amino acids. Catalyzes the dehydration of (2R,3R)-2,3-dihydroxy-3-methylpentanoate (2,3-dihydroxy-3-methylvalerate) into 2-oxo-3-methylpentanoate (2-oxo-3-methylvalerate) and of (2R)-2,3-dihydroxy-3-methylbutanoate (2,3-dihydroxyisovalerate) into 2-oxo-3-methylbutanoate (2-oxoisovalerate), the penultimate precursor to L-isoleucine and L-valine, respectively. This Brucella anthropi (strain ATCC 49188 / DSM 6882 / CCUG 24695 / JCM 21032 / LMG 3331 / NBRC 15819 / NCTC 12168 / Alc 37) (Ochrobactrum anthropi) protein is Dihydroxy-acid dehydratase.